The chain runs to 101 residues: ATP-dependent Clp protease adapter protein ClpS (101 aa).

Positions 1 to 24 (MVVASAPAKPGSVGQQESASRDAT) are disordered. Positions 13–23 (VGQQESASRDA) are enriched in polar residues.

This sequence belongs to the ClpS family. Binds to the N-terminal domain of the chaperone ClpA.

Functionally, involved in the modulation of the specificity of the ClpAP-mediated ATP-dependent protein degradation. The sequence is that of ATP-dependent Clp protease adapter protein ClpS from Mycobacterium marinum (strain ATCC BAA-535 / M).